The chain runs to 156 residues: Putative HTH-type transcriptional regulator BadM (156 aa).

Positions 4–130 (RLQKSTMCGL…RSVSITSLLK (127 aa)) constitute an HTH rrf2-type domain. Residues 136–156 (RRKTERGPNGASARHSSAGRA) form a disordered region. The segment covering 145–156 (GASARHSSAGRA) has biased composition (low complexity).

This Rhodopseudomonas palustris (strain ATCC BAA-98 / CGA009) protein is Putative HTH-type transcriptional regulator BadM (badM).